Here is a 415-residue protein sequence, read N- to C-terminus: Gamma-glutamyl phosphate reductase (415 aa).

The protein belongs to the gamma-glutamyl phosphate reductase family.

It is found in the cytoplasm. It carries out the reaction L-glutamate 5-semialdehyde + phosphate + NADP(+) = L-glutamyl 5-phosphate + NADPH + H(+). The protein operates within amino-acid biosynthesis; L-proline biosynthesis; L-glutamate 5-semialdehyde from L-glutamate: step 2/2. Its function is as follows. Catalyzes the NADPH-dependent reduction of L-glutamate 5-phosphate into L-glutamate 5-semialdehyde and phosphate. The product spontaneously undergoes cyclization to form 1-pyrroline-5-carboxylate. This Bacillus cereus (strain B4264) protein is Gamma-glutamyl phosphate reductase.